The chain runs to 51 residues: Large ribosomal subunit protein bL33 (51 aa).

This sequence belongs to the bacterial ribosomal protein bL33 family.

This Colwellia psychrerythraea (strain 34H / ATCC BAA-681) (Vibrio psychroerythus) protein is Large ribosomal subunit protein bL33.